A 918-amino-acid chain; its full sequence is Translation initiation factor IF-2 (918 aa).

The segment at 39 to 321 is disordered; it reads DDASEKHLRN…KRDGRMKETT (283 aa). Low complexity predominate over residues 95-146; the sequence is KSSNNESTTRNNNNNKNGNQNRNNTNGRPNNNQNRPNNNRNQNNNRNGNRPN. The span at 148-158 shows a compositional bias: basic and acidic residues; sequence PKRDEKQDRIR. Over residues 159-174 the composition is skewed to low complexity; it reads ASVAEAARMAAQANRE. Residues 180–190 show a composition bias toward polar residues; sequence PQANRQRTNSA. 3 stretches are compositionally biased toward low complexity: residues 201–231, 237–267, and 278–296; these read NNQN…NNRN, SRPN…TANN, and GRNN…QNRP. A compositionally biased stretch (basic residues) spans 302-313; it reads RKNKKRNRKAKR. The tr-type G domain occupies 419–588; it reads SRPPVVTIMG…LLQAEVLELK (170 aa). The segment at 428-435 is G1; that stretch reads GHVDHGKT. GTP is bound at residue 428–435; the sequence is GHVDHGKT. Residues 453–457 are G2; it reads GITQG. The interval 474-477 is G3; the sequence is DTPG. GTP contacts are provided by residues 474-478 and 528-531; these read DTPGH and NKID. Residues 528–531 are G4; the sequence is NKID. The tract at residues 564–566 is G5; sequence SAK.

Belongs to the TRAFAC class translation factor GTPase superfamily. Classic translation factor GTPase family. IF-2 subfamily.

The protein localises to the cytoplasm. One of the essential components for the initiation of protein synthesis. Protects formylmethionyl-tRNA from spontaneous hydrolysis and promotes its binding to the 30S ribosomal subunits. Also involved in the hydrolysis of GTP during the formation of the 70S ribosomal complex. The polypeptide is Translation initiation factor IF-2 (Pediococcus pentosaceus (strain ATCC 25745 / CCUG 21536 / LMG 10740 / 183-1w)).